The primary structure comprises 206 residues: uncharacterized protein (206 aa).

Residues 81 to 132 (EEQQQQQHHVHGPGCSHGHHHDSHANDGHHDEHHDEHHDHVNPDDVEDEFPR) form a disordered region. Residues 82-96 (EQQQQQHHVHGPGCS) show a composition bias toward low complexity. Over residues 103 to 123 (SHANDGHHDEHHDEHHDHVNP) the composition is skewed to basic and acidic residues. The helical transmembrane segment at 150–166 (YLTALCLLPIIGSLFSI) threads the bilayer.

The protein localises to the membrane. This is an uncharacterized protein from Dictyostelium discoideum (Social amoeba).